A 318-amino-acid polypeptide reads, in one-letter code: Ferrochelatase (318 aa).

Residues histidine 194 and glutamate 275 each coordinate Fe cation.

The protein belongs to the ferrochelatase family.

Its subcellular location is the cytoplasm. The enzyme catalyses heme b + 2 H(+) = protoporphyrin IX + Fe(2+). The protein operates within porphyrin-containing compound metabolism; protoheme biosynthesis; protoheme from protoporphyrin-IX: step 1/1. In terms of biological role, catalyzes the ferrous insertion into protoporphyrin IX. In Xanthomonas axonopodis pv. citri (strain 306), this protein is Ferrochelatase.